Consider the following 298-residue polypeptide: NAD kinase (298 aa).

Aspartate 80 functions as the Proton acceptor in the catalytic mechanism. NAD(+) is bound by residues 80 to 81 (DG), 154 to 155 (ND), arginine 182, aspartate 184, 195 to 200 (TAYALS), alanine 219, and glutamine 253.

The protein belongs to the NAD kinase family. Requires a divalent metal cation as cofactor.

Its subcellular location is the cytoplasm. It catalyses the reaction NAD(+) + ATP = ADP + NADP(+) + H(+). In terms of biological role, involved in the regulation of the intracellular balance of NAD and NADP, and is a key enzyme in the biosynthesis of NADP. Catalyzes specifically the phosphorylation on 2'-hydroxyl of the adenosine moiety of NAD to yield NADP. This Acidovorax ebreus (strain TPSY) (Diaphorobacter sp. (strain TPSY)) protein is NAD kinase.